The primary structure comprises 182 residues: Crossover junction endodeoxyribonuclease RuvC (182 aa).

Catalysis depends on residues Asp-7, Glu-68, and Asp-141. Residues Asp-7, Glu-68, and Asp-141 each coordinate Mg(2+).

It belongs to the RuvC family. As to quaternary structure, homodimer which binds Holliday junction (HJ) DNA. The HJ becomes 2-fold symmetrical on binding to RuvC with unstacked arms; it has a different conformation from HJ DNA in complex with RuvA. In the full resolvosome a probable DNA-RuvA(4)-RuvB(12)-RuvC(2) complex forms which resolves the HJ. It depends on Mg(2+) as a cofactor.

It is found in the cytoplasm. The enzyme catalyses Endonucleolytic cleavage at a junction such as a reciprocal single-stranded crossover between two homologous DNA duplexes (Holliday junction).. In terms of biological role, the RuvA-RuvB-RuvC complex processes Holliday junction (HJ) DNA during genetic recombination and DNA repair. Endonuclease that resolves HJ intermediates. Cleaves cruciform DNA by making single-stranded nicks across the HJ at symmetrical positions within the homologous arms, yielding a 5'-phosphate and a 3'-hydroxyl group; requires a central core of homology in the junction. The consensus cleavage sequence is 5'-(A/T)TT(C/G)-3'. Cleavage occurs on the 3'-side of the TT dinucleotide at the point of strand exchange. HJ branch migration catalyzed by RuvA-RuvB allows RuvC to scan DNA until it finds its consensus sequence, where it cleaves and resolves the cruciform DNA. This chain is Crossover junction endodeoxyribonuclease RuvC, found in Thermobifida fusca (strain YX).